The primary structure comprises 879 residues: Translation initiation factor IF-2 (879 aa).

Disordered stretches follow at residues 45-216 (AGHM…ERKR) and 228-293 (SYEE…EKPV). 3 stretches are compositionally biased toward basic and acidic residues: residues 60–72 (NAAK…DKNS), 83–99 (RKTD…KISP), and 107–163 (AEKK…ERLQ). Low complexity predominate over residues 164-173 (MEAALQAQMQ). Basic and acidic residues-rich tracts occupy residues 174-216 (EQER…ERKR), 228-271 (SYEE…ERRN), and 280-291 (RNNDNKKGKFEK). Residues 380-549 (VRAPVVTIMG…LIQAEMLELT (170 aa)) enclose the tr-type G domain. Residues 389–396 (GHVDHGKT) are G1. 389 to 396 (GHVDHGKT) provides a ligand contact to GTP. The tract at residues 414 to 418 (GITQH) is G2. Positions 435-438 (DTPG) are G3. GTP is bound by residues 435 to 439 (DTPGH) and 489 to 492 (NKMD). The tract at residues 489-492 (NKMD) is G4. A G5 region spans residues 525 to 527 (SAK).

It belongs to the TRAFAC class translation factor GTPase superfamily. Classic translation factor GTPase family. IF-2 subfamily.

The protein resides in the cytoplasm. Its function is as follows. One of the essential components for the initiation of protein synthesis. Protects formylmethionyl-tRNA from spontaneous hydrolysis and promotes its binding to the 30S ribosomal subunits. Also involved in the hydrolysis of GTP during the formation of the 70S ribosomal complex. The protein is Translation initiation factor IF-2 of Dichelobacter nodosus (strain VCS1703A).